A 316-amino-acid chain; its full sequence is Apolipoprotein E (316 aa).

The signal sequence occupies residues 1–18 (MKVLWVAVVVALLAGCQA). A glycan (O-linked (GalNAc...) threonine) is linked at T32. Repeat copies occupy residues 79–100 (ALME…GQLG), 101–122 (PMAQ…ARLG), 123–144 (SDME…AMLG), 145–166 (QSTE…KRLL), 167–188 (RDAD…EGAE), 189–210 (RSLS…SRAA), 211–232 (TLST…QKLH), and 233–254 (GRLE…QQLE). The 8 X 22 AA approximate tandem repeats stretch occupies residues 79 to 254 (ALMEETMKEV…RLDKIRQQLE (176 aa)). The residue at position 142 (M142) is a Methionine sulfoxide. Position 146 is a phosphoserine (S146). Residues 157–167 (HLRKLPKRLLR) are LDL and other lipoprotein receptors binding. 161–164 (LPKR) is a binding site for heparin. A lipid-binding and lipoprotein association region spans residues 209–289 (AATLSTLAGQ…SWFEPLVEDM (81 aa)). The O-linked (GalNAc...) threonine glycan is linked to T211. Position 228–235 (228–235 (RQKLHGRL)) interacts with heparin. Residues 265–316 (NQMRLQAEAFQARLRSWFEPLVEDMQRQWAGLVEKVQLALRPSPTSPPSENH) form a homooligomerization region. The tract at residues 277 to 289 (RLRSWFEPLVEDM) is specificity for association with VLDL. O-linked (GalNAc...) threonine glycosylation occurs at T309. Residue S310 is glycosylated (O-linked (GalNAc...) serine).

Belongs to the apolipoprotein A1/A4/E family. As to quaternary structure, homotetramer. May interact with ABCA1; functionally associated with ABCA1 in the biogenesis of HDLs. May interact with APP/A4 amyloid-beta peptide; the interaction is extremely stable in vitro but its physiological significance is unclear. May interact with MAPT. May interact with MAP2. In the cerebrospinal fluid, interacts with secreted SORL1. Interacts with PMEL; this allows the loading of PMEL luminal fragment on ILVs to induce fibril nucleation. Post-translationally, APOE exists as multiple glycosylated and sialylated glycoforms within cells and in plasma. The extent of glycosylation and sialylation are tissue and context specific. Glycated in plasma VLDL. In terms of processing, phosphorylated by FAM20C in the extracellular medium.

The protein localises to the secreted. The protein resides in the extracellular space. It is found in the extracellular matrix. It localises to the extracellular vesicle. Its subcellular location is the endosome. The protein localises to the multivesicular body. Its function is as follows. APOE is an apolipoprotein, a protein associating with lipid particles, that mainly functions in lipoprotein-mediated lipid transport between organs via the plasma and interstitial fluids. APOE is a core component of plasma lipoproteins and is involved in their production, conversion and clearance. Apolipoproteins are amphipathic molecules that interact both with lipids of the lipoprotein particle core and the aqueous environment of the plasma. As such, APOE associates with chylomicrons, chylomicron remnants, very low density lipoproteins (VLDL) and intermediate density lipoproteins (IDL) but shows a preferential binding to high-density lipoproteins (HDL). It also binds a wide range of cellular receptors including the LDL receptor/LDLR and the very low-density lipoprotein receptor/VLDLR that mediate the cellular uptake of the APOE-containing lipoprotein particles. Finally, APOE also has a heparin-binding activity and binds heparan-sulfate proteoglycans on the surface of cells, a property that supports the capture and the receptor-mediated uptake of APOE-containing lipoproteins by cells. The polypeptide is Apolipoprotein E (APOE) (Bos taurus (Bovine)).